The following is a 1582-amino-acid chain: ATP-binding cassette sub-family C member 8 (1582 aa).

The Extracellular portion of the chain corresponds to Met-1–Ala-30. A disulfide bridge links Cys-6 with Cys-26. The N-linked (GlcNAc...) asparagine glycan is linked to Asn-10. A helical membrane pass occupies residues Leu-31–Leu-47. Topologically, residues Phe-48–Asn-72 are cytoplasmic. The chain crosses the membrane as a helical span at residues Leu-73–Ile-89. The Extracellular segment spans residues Ala-90–Leu-106. Residues Tyr-107–Tyr-123 traverse the membrane as a helical segment. At Tyr-124–Leu-136 the chain is on the cytoplasmic side. Residues Ile-137–Lys-153 form a helical membrane-spanning segment. Residues Phe-154–Phe-169 lie on the Extracellular side of the membrane. A helical transmembrane segment spans residues Cys-170–Glu-186. The Cytoplasmic portion of the chain corresponds to Val-187–Ser-303. The region spanning Leu-299 to Lys-602 is the ABC transmembrane type-1 1 domain. Residues Thr-304 to Cys-319 form a helical membrane-spanning segment. Over Ile-320 to Tyr-356 the chain is Extracellular. Residues Val-357–Phe-372 traverse the membrane as a helical segment. At Leu-373–Leu-438 the chain is on the cytoplasmic side. The helical transmembrane segment at Trp-439–Tyr-454 threads the bilayer. Over Ile-455–Ala-460 the chain is Extracellular. The helical transmembrane segment at Leu-461–Val-473 threads the bilayer. Residues Gln-474–Ser-541 are Cytoplasmic-facing. The helical transmembrane segment at Ile-542–Ile-557 threads the bilayer. Over Thr-558–Ala-576 the chain is Extracellular. The chain crosses the membrane as a helical span at residues Phe-577 to Leu-592. The Cytoplasmic portion of the chain corresponds to Leu-593–Leu-1013. The ABC transporter 1 domain maps to Val-679–Thr-930. ATP is bound by residues Trp-688, Gly-716, Ser-720, and Ser-721. Ser-720 lines the Mg(2+) pocket. The tract at residues Ser-741–Gly-768 is disordered. Positions Asn-753–Ser-766 are enriched in basic and acidic residues. Residue Gln-775 coordinates Mg(2+). Residues Leu-939 to Pro-950 are compositionally biased toward basic and acidic residues. A disordered region spans residues Leu-939–Ser-962. In terms of domain architecture, ABC transmembrane type-1 2 spans Leu-1013 to Ile-1307. The chain crosses the membrane as a helical span at residues Ser-1014–Asp-1031. Topologically, residues Tyr-1032–Val-1067 are extracellular. N-linked (GlcNAc...) asparagine glycosylation occurs at Asn-1050. A helical transmembrane segment spans residues Phe-1068–Val-1084. Residues Thr-1085–Leu-1143 lie on the Cytoplasmic side of the membrane. A helical transmembrane segment spans residues Ser-1144–Thr-1161. Position 1162 (Pro-1162) is a topological domain, extracellular. A helical membrane pass occupies residues Val-1163–Cys-1175. At Tyr-1176–Glu-1249 the chain is on the cytoplasmic side. A helical membrane pass occupies residues Val-1250–Ala-1265. Over Thr-1266–Val-1281 the chain is Extracellular. A helical membrane pass occupies residues Gly-1282 to Trp-1297. The Cytoplasmic portion of the chain corresponds to Met-1298 to Lys-1582. The 235-residue stretch at Ile-1345 to Arg-1579 folds into the ABC transporter 2 domain. ADP-binding residues include Thr-1381, Gly-1382, Gly-1384, Lys-1385, Ser-1386, and Ser-1387. Position 1483 (Ser-1483) interacts with ATP.

It belongs to the ABC transporter superfamily. ABCC family. Conjugate transporter (TC 3.A.1.208) subfamily. Forms an heterooctamer with KCNJ11; four ABCC8/SUR1 molecules interact with one KCNJ11 homotetramer.

Its subcellular location is the cell membrane. With respect to regulation, KATP channels are regulated by cytoplasmic ATP/ADP ratios; ATP inhibits the channel by closing the pore, while ADP activates the channel. Activated by phosphatidylinositol 4,5-biphosphate (PtdIns(4,5)P2). Its function is as follows. Regulator subunit of pancreatic ATP-sensitive potassium channel (KATP), playing a major role in the regulation of insulin release. In pancreatic cells, it forms KATP channels with KCNJ11; KCNJ11 forms the channel pore while ABCC8 is required for activation and regulation. The protein is ATP-binding cassette sub-family C member 8 (Abcc8) of Rattus norvegicus (Rat).